A 275-amino-acid chain; its full sequence is NAD kinase (275 aa).

Aspartate 53 acts as the Proton acceptor in catalysis. NAD(+) contacts are provided by residues 53-54, 129-130, arginine 155, aspartate 157, and 168-173; these read DG, NE, and TAYNKS.

The protein belongs to the NAD kinase family. It depends on a divalent metal cation as a cofactor.

Its subcellular location is the cytoplasm. The enzyme catalyses NAD(+) + ATP = ADP + NADP(+) + H(+). In terms of biological role, involved in the regulation of the intracellular balance of NAD and NADP, and is a key enzyme in the biosynthesis of NADP. Catalyzes specifically the phosphorylation on 2'-hydroxyl of the adenosine moiety of NAD to yield NADP. The protein is NAD kinase of Streptococcus agalactiae serotype Ia (strain ATCC 27591 / A909 / CDC SS700).